Consider the following 317-residue polypeptide: MPGEQQAEEEEEEEMQEEMVLLVKGEEEEGEEKYEVVKLKIPVDNKEVASQMPAPSADPARPHACPDCGRAFARRSTLAKHARTHTGERPFACTECGRCFSQKSALTKHGRTHTGERPYQCPECDKRFSAASNLRQHRRRHTGEKPYACAHCGRRFAQSSNYAQHLRVHTGEKPYACPDCGRAFGGSSCLARHRRTHTGERPYACADCGTRFAQSSALAKHRRVHTGEKPHRCAVCGRRFGHRSNLAEHARTHTGERPYPCTECGRRFRLSSHFIRHRRAHMRRRLYICAGCGRDFKLPASATAATPTERCPECEGS.

Lys-33 participates in a covalent cross-link: Glycyl lysine isopeptide (Lys-Gly) (interchain with G-Cter in SUMO2). 8 C2H2-type zinc fingers span residues 63-85 (HACP…ARTH), 91-113 (FACT…GRTH), 119-141 (YQCP…RRRH), 147-169 (YACA…LRVH), 175-197 (YACP…RRTH), 203-225 (YACA…RRVH), 231-253 (HRCA…ARTH), and 259-281 (YPCT…RRAH).

It belongs to the krueppel C2H2-type zinc-finger protein family.

Its subcellular location is the nucleus. Functionally, may be involved in transcriptional regulation. This chain is Zinc finger protein 771 (Znf771), found in Mus musculus (Mouse).